A 505-amino-acid chain; its full sequence is L-arabinose isomerase (505 aa).

Positions 310, 337, 354, and 453 each coordinate Mn(2+).

This sequence belongs to the arabinose isomerase family. The cofactor is Mn(2+).

It carries out the reaction beta-L-arabinopyranose = L-ribulose. Its pathway is carbohydrate degradation; L-arabinose degradation via L-ribulose; D-xylulose 5-phosphate from L-arabinose (bacterial route): step 1/3. Functionally, catalyzes the conversion of L-arabinose to L-ribulose. The protein is L-arabinose isomerase of Clavibacter sepedonicus (Clavibacter michiganensis subsp. sepedonicus).